Here is a 141-residue protein sequence, read N- to C-terminus: Hemoglobin subunit alpha (141 aa).

One can recognise a Globin domain in the interval 1-141 (VLSAADKTNV…VSTVLTSKYR (141 aa)). At Ser3 the chain carries Phosphoserine. Lys7 bears the N6-succinyllysine mark. At Thr8 the chain carries Phosphothreonine. Lys11 is subject to N6-succinyllysine. N6-acetyllysine; alternate is present on Lys16. The residue at position 16 (Lys16) is an N6-succinyllysine; alternate. Tyr24 is subject to Phosphotyrosine. A Phosphoserine modification is found at Ser35. At Lys40 the chain carries N6-succinyllysine. At Ser49 the chain carries Phosphoserine. His58 lines the O2 pocket. His87 is a binding site for heme b. A Phosphoserine modification is found at Ser102. Residue Thr108 is modified to Phosphothreonine. A phosphoserine mark is found at Ser124 and Ser131. Thr134 and Thr137 each carry phosphothreonine. Position 138 is a phosphoserine (Ser138).

This sequence belongs to the globin family. As to quaternary structure, heterotetramer of two alpha chains and two beta chains. In terms of tissue distribution, red blood cells.

Its function is as follows. Involved in oxygen transport from the lung to the various peripheral tissues. In Tamiasciurus hudsonicus (American red squirrel), this protein is Hemoglobin subunit alpha.